A 1230-amino-acid chain; its full sequence is Cullin-associated NEDD8-dissociated protein 1 (1230 aa).

The residue at position 2 (alanine 2) is an N-acetylalanine. 12 HEAT repeats span residues 2–39, 44–81, 83–119, 131–165, 171–208, 210–247, 248–282, 289–366, 370–407, 424–467, 471–510, and 515–552; these read ASAS…KDSI, DSER…KVKE, QVET…ELPP, CKKI…LSRQ, NFHP…SCGN, VFVG…QAGH, RIGE…FESF, EVYP…TRHE, EFYK…QTRP, PLTM…VLPG, QHIP…NHSP, and PHVQ…VIRP. Lysine 55 is modified (N6-acetyllysine). Residues 315–343 form a disordered region; that stretch reads DEDEDENAMDADGGDDDDQGSDDEYSDDG. Phosphoserine is present on serine 335. Residue serine 558 is modified to Phosphoserine. HEAT repeat units follow at residues 563–602, 606–643, 646–683, 688–725, 729–768, 770–808, 809–845, 852–889, 890–927, 928–960, 961–998, 1002–1039, 1043–1097, 1099–1133, and 1140–1189; these read PYIK…NLGD, SDLP…LKID, PVLG…NYSD, AMID…VYPS, KISG…TGTN, LGYM…ALTR, ACPK…LGEV, SGQL…GNLP, EYLP…GLKP, YVEN…KLTL, IDPE…DHPQ, PLLK…NKPS, DLLD…DSCL, RLDI…LSTL, and QRLD…IPEA. Residue lysine 971 is modified to N6-acetyllysine.

The protein belongs to the CAND family. Interacts with TBP. Part of a complex that contains CUL1 and RBX1. Interacts with unneddylated cullins: interacts with CUL1, CUL2, CUL3, CUL4A, CUL4B and CUL5. Does not bind neddylated CUL1. Interaction with cullins is abolished in presence of COMMD1, which antagonizes with CAND1 for interacting with cullins. Interacts with ERCC6. Interacts with DCUN1D1, DCUN1D2, DCUN1D3, DCUN1D4 and DCUN1D5; these interactions are bridged by cullins and strongly inhibits the neddylation of cullins.

The protein resides in the cytoplasm. The protein localises to the nucleus. In terms of biological role, key assembly factor of SCF (SKP1-CUL1-F-box protein) E3 ubiquitin ligase complexes that promotes the exchange of the substrate-recognition F-box subunit in SCF complexes, thereby playing a key role in the cellular repertoire of SCF complexes. Acts as a F-box protein exchange factor. The exchange activity of CAND1 is coupled with cycles of neddylation conjugation: in the deneddylated state, cullin-binding CAND1 binds CUL1-RBX1, increasing dissociation of the SCF complex and promoting exchange of the F-box protein. Probably plays a similar role in other cullin-RING E3 ubiquitin ligase complexes. The sequence is that of Cullin-associated NEDD8-dissociated protein 1 (CAND1) from Pongo abelii (Sumatran orangutan).